The primary structure comprises 395 residues: Fractalkine (395 aa).

The signal sequence occupies residues 1-24 (MAPSPLAWLLRLAAFFHLCTLLPG). Residues 25–100 (QHLGMTKCEI…HQAAALTKNG (76 aa)) are chemokine and involved in interaction with ITGAV:ITGB3 and ITGA4:ITGB1. At 25–336 (QHLGMTKCEI…TPVPDTQAAT (312 aa)) the chain is on the extracellular side. 2 disulfide bridges follow: C32/C58 and C36/C74. The tract at residues 101–336 (GKFEKRVDNV…TPVPDTQAAT (236 aa)) is mucin-like stalk. 2 stretches are compositionally biased toward polar residues: residues 148–172 (ARGT…TSEA) and 201–210 (AVYQSGSSSW). Disordered stretches follow at residues 148–180 (ARGT…LTAK) and 201–305 (AVYQ…SGSQ). The span at 218 to 236 (SPSTTAPSPQVSTTSPSTP) shows a compositional bias: low complexity. A helical transmembrane segment spans residues 337 to 357 (RRQAVGLLAFLGLLFCLGVAM). Over 358-395 (FAYQSLQGCPRKMAGEMVEGLRYVPRSCGSNSYVLVPV) the chain is Cytoplasmic.

This sequence belongs to the intercrine delta family. In terms of assembly, monomer. Forms a ternary complex with CX3CR1 and ITGAV:ITGB3 or ITGA4:ITGB1. Post-translationally, a soluble short 80 kDa form may be released by proteolytic cleavage from the long membrane-anchored form. Highest levels in brain. Lower levels in kidney, heart and lung. Also found in skeletal muscle and testis. Highly expressed in lesional smooth muscle cells, but not macrophages. Low levels of ABCD-3 mRNA were also found in anti-CD40-stimulated splenic B-cells, but not in resting B-cells. Also expressed in dendritic cells.

It is found in the cell membrane. Its subcellular location is the secreted. Its function is as follows. Chemokine that acts as a ligand for both CX3CR1 and integrins ITGAV:ITGB3 and ITGA4:ITGB1. The CX3CR1-CX3CL1 signaling exerts distinct functions in different tissue compartments, such as immune response, inflammation, cell adhesion and chemotaxis. Regulates leukocyte adhesion and migration processes at the endothelium. Can activate integrins in both a CX3CR1-dependent and CX3CR1-independent manner. In the presence of CX3CR1, activates integrins by binding to the classical ligand-binding site (site 1) in integrins. In the absence of CX3CR1, binds to a second site (site 2) in integrins which is distinct from site 1 and enhances the binding of other integrin ligands to site 1. The soluble form is chemotactic for T-cells and monocytes, but not for neutrophils. Functionally, the membrane-bound form promotes adhesion of those leukocytes to endothelial cells. The protein is Fractalkine of Mus musculus (Mouse).